A 39-amino-acid chain; its full sequence is QKKGFCAGYCSYSCAKTDEWTFHQTCGKMYCCIPPPKKG.

Residue Gln-1 is modified to Pyrrolidone carboxylic acid. 3 disulfide bridges follow: Cys-6–Cys-32, Cys-10–Cys-26, and Cys-14–Cys-31.

It localises to the secreted. The protein is Small basic protein 1 of Anas platyrhynchos (Mallard).